The primary structure comprises 188 residues: Protein-export protein SecB (188 aa).

Disordered stretches follow at residues 1 to 21 (MADE…EQPK) and 160 to 188 (RQKA…DTQQ). Over residues 176–188 (SDSTAAQGSDTQQ) the composition is skewed to polar residues.

This sequence belongs to the SecB family. As to quaternary structure, homotetramer, a dimer of dimers. One homotetramer interacts with 1 SecA dimer.

Its subcellular location is the cytoplasm. In terms of biological role, one of the proteins required for the normal export of preproteins out of the cell cytoplasm. It is a molecular chaperone that binds to a subset of precursor proteins, maintaining them in a translocation-competent state. It also specifically binds to its receptor SecA. The sequence is that of Protein-export protein SecB from Alkalilimnicola ehrlichii (strain ATCC BAA-1101 / DSM 17681 / MLHE-1).